The chain runs to 432 residues: Gamma-glutamyl phosphate reductase (432 aa).

The protein belongs to the gamma-glutamyl phosphate reductase family.

It is found in the cytoplasm. The catalysed reaction is L-glutamate 5-semialdehyde + phosphate + NADP(+) = L-glutamyl 5-phosphate + NADPH + H(+). Its pathway is amino-acid biosynthesis; L-proline biosynthesis; L-glutamate 5-semialdehyde from L-glutamate: step 2/2. Catalyzes the NADPH-dependent reduction of L-glutamate 5-phosphate into L-glutamate 5-semialdehyde and phosphate. The product spontaneously undergoes cyclization to form 1-pyrroline-5-carboxylate. The polypeptide is Gamma-glutamyl phosphate reductase (Kineococcus radiotolerans (strain ATCC BAA-149 / DSM 14245 / SRS30216)).